The primary structure comprises 479 residues: Lincomycin resistance protein LmrB (479 aa).

14 helical membrane passes run 19-41 (MISL…IALT), 56-78 (WLTT…LLQW), 85-107 (FTVS…SFSF), 112-134 (RIVQ…LVIF), 141-160 (AAMG…GPTF), 170-192 (WHWI…IAYM), 205-222 (VLSI…VFGF), 232-251 (WSSP…LILF), 272-294 (MFIL…MLLL), 304-326 (LTAF…MSPV), 338-355 (WLVI…WFFS), 360-382 (TSTA…MIMM), 403-425 (IMNT…IMAA), and 449-471 (AGVQ…GAFF).

This sequence belongs to the major facilitator superfamily. EmrB family.

Its subcellular location is the cell membrane. Proton-dependent transporter. May mediate the efflux of lincomycin. This is Lincomycin resistance protein LmrB (lmrB) from Bacillus subtilis (strain 168).